Here is a 381-residue protein sequence, read N- to C-terminus: tRNA (guanine(6)-N2)-methyltransferase (381 aa).

The THUMP domain maps to 43–157; that stretch reads KLIPKINYLS…FDELIVGIDT (115 aa). Residues 173 to 177, 204 to 206, D261, 289 to 290, and N306 contribute to the S-adenosyl-L-methionine site; these read HPAHL, SGT, and DA.

The protein belongs to the methyltransferase superfamily.

It is found in the cytoplasm. The enzyme catalyses guanosine(6) in tRNA + S-adenosyl-L-methionine = N(2)-methylguanosine(6) in tRNA + S-adenosyl-L-homocysteine + H(+). In terms of biological role, S-adenosyl-L-methionine-dependent methyltransferase that catalyzes the methylation of the guanosine nucleotide at position 6 (m2G6) in tRNA(Cys). This is tRNA (guanine(6)-N2)-methyltransferase from Methanocaldococcus jannaschii (strain ATCC 43067 / DSM 2661 / JAL-1 / JCM 10045 / NBRC 100440) (Methanococcus jannaschii).